Reading from the N-terminus, the 1735-residue chain is Inactive tyrosine-protein kinase PEAK1 (1735 aa).

Disordered stretches follow at residues 26–66 (LHQL…PPVA) and 111–145 (LSQK…KISN). 2 stretches are compositionally biased toward polar residues: residues 111–121 (LSQKPLNNNSE) and 130–145 (DPQQ…KISN). Phosphoserine is present on serine 282. Disordered regions lie at residues 324-410 (NSGV…SVKV), 491-514 (GRPK…LTPG), and 537-580 (SPRQ…SKTI). Residues 325-336 (SGVSYGQGSVQS) show a composition bias toward low complexity. Residues 337-365 (TISSDCTSPGSSFTEESRSETASSLSQKV) show a composition bias toward polar residues. Residues 367 to 378 (NGGISPGNPGNS) show a composition bias toward low complexity. Over residues 384 to 393 (TESNFESPPG) the composition is skewed to polar residues. Low complexity predominate over residues 498-509 (SSSTPNSPVTSP). Phosphoserine occurs at positions 537, 569, and 584. Residues 566-580 (APTSPTATNISSKTI) are compositionally biased toward polar residues. Residues tyrosine 632 and tyrosine 638 each carry the phosphotyrosine modification. Position 645 is a phosphoserine (serine 645). The residue at position 662 (tyrosine 662) is a Phosphotyrosine. Disordered stretches follow at residues 663-762 (EEIE…REKA), 800-919 (PDAD…AADA), and 1019-1097 (RNSE…SATY). 3 stretches are compositionally biased toward polar residues: residues 704 to 735 (QEFN…QRPT), 745 to 757 (AQGS…SSNS), and 819 to 839 (LFTS…SPTA). Serine 824 and serine 825 each carry phosphoserine. Low complexity predominate over residues 847-863 (TKPVTSPPSKLVTSAQS). Positions 864 to 873 (EPPPPFPPPR) are enriched in pro residues. Over residues 879 to 901 (YHASNLLQRHFTNWTKPTSPTRS) the composition is skewed to polar residues. At serine 897 the chain carries Phosphoserine. Composition is skewed to basic and acidic residues over residues 902–919 (TEAE…AADA) and 1037–1055 (ACSR…RDPR). Residues 1076–1086 (EREEEKDDTLD) show a composition bias toward acidic residues. Threonine 1141 is subject to Phosphothreonine. Tyrosine 1177 bears the Phosphotyrosine mark. A required for homodimerization region spans residues 1274–1300 (EVVGKLRSLHTDALKRLAVKCEDLFMA). A Protein kinase domain is found at 1302-1664 (QKDQLRFGVD…LLWGPREDLF (363 aa)). At serine 1363 the chain carries Phosphoserine. The interval 1394 to 1445 (WEDPDAPEKAEDGTEDSEEEGKAETLGGNPEPCSETEPSQKENQRVTNRKQR) is disordered. Positions 1659-1732 (PREDLFQIFT…DSLSYIVKIL (74 aa)) are required for homodimerization.

It belongs to the protein kinase superfamily. Homodimer. Interacts with BCAR1 and CRK. Interacts with PRAG1. Interacts (when phosphorylated at Tyr-1177) with SHC1 (via PID domain). Found in a complex with PPP1CA, PPP1CC and SHC1. Interacts (when phosphorylated at Tyr-632) with tensin TNS3 (when phosphorylated on the SH2 domain); TNS3 also interacts with integrins ITGB1, ITGB3 and ITGB5 and mediates their association with PEAK1. Phosphorylated on tyrosine in a CSK-dependent manner in response to adhesion to fibronectin and to EGF stimulation. Phosphorylation at Tyr-662 by a Src family kinase controls subcellular localization to focal adhesion and focal adhesion dynamics. Phosphorylation at Tyr-1177 is essential for binding to SHC1. Phosphorylation at Tyr-632 promotes interaction with tensin TNS3.

The protein localises to the cytoplasm. The protein resides in the cytoskeleton. Its subcellular location is the cell junction. It localises to the focal adhesion. Its function is as follows. Probable catalytically inactive kinase. Scaffolding protein that regulates the cytoskeleton to control cell spreading and migration by modulating focal adhesion dynamics. Acts as a scaffold for mediating EGFR signaling. The protein is Inactive tyrosine-protein kinase PEAK1 (Peak1) of Mus musculus (Mouse).